The chain runs to 378 residues: Acid phosphatase-like protein XcAP-2 (378 aa).

Positions 1–19 (MKTTILLLVVLTIVQLSKA) are cleaved as a signal peptide. 3 disulfide bridges follow: Cys-147/Cys-374, Cys-168/Cys-220, and Cys-347/Cys-351.

The protein belongs to the histidine acid phosphatase family.

The protein localises to the secreted. Its function is as follows. Probably modulates blood feeding of fleas on vertebrate species by binding and sequestering different mediators involved in the host response. Binds histamine. Binds leukotriene B4, leukotriene C4, leukotriene D4 and leukotriene E4. Does not bind serotonin, adrenaline, noradrenaline, ADP, and stable analogs of thromboxane A2: U-46619 and cTXA2. This Xenopsylla cheopis (Oriental rat flea) protein is Acid phosphatase-like protein XcAP-2.